The primary structure comprises 136 residues: uncharacterized protein (136 aa).

The helical transmembrane segment at 102–118 threads the bilayer; sequence FVIVFFFFSFSLSISCV.

The protein resides in the membrane. This is an uncharacterized protein from Saccharomyces cerevisiae (strain ATCC 204508 / S288c) (Baker's yeast).